The following is a 134-amino-acid chain: Small ribosomal subunit protein bS16 (134 aa).

The interval glycine 80–glutamate 134 is disordered. Residues alanine 115–glutamate 134 are compositionally biased toward low complexity.

This sequence belongs to the bacterial ribosomal protein bS16 family.

In Brucella anthropi (strain ATCC 49188 / DSM 6882 / CCUG 24695 / JCM 21032 / LMG 3331 / NBRC 15819 / NCTC 12168 / Alc 37) (Ochrobactrum anthropi), this protein is Small ribosomal subunit protein bS16.